The chain runs to 363 residues: Palmitoyltransferase ZDHHC9 (363 aa).

The Cytoplasmic segment spans residues 1–35 (MSVMVVRKKVTRKWEKLPGRNTFCCDGRVMMARQK). The chain crosses the membrane as a helical span at residues 36–56 (GIFYLTLFLILGTCTLFFAFE). The Lumenal portion of the chain corresponds to 57–63 (CRYLAVQ). Residues 64 to 84 (LSPAIPVFAAMLFLFSMATLL) form a helical membrane-spanning segment. At 85-183 (RTSFSDPGVI…NCVGKRNYRY (99 aa)) the chain is on the cytoplasmic side. A DHHC domain is found at 139-189 (KYCYTCKIFRPPRASHCSICDNCVERFDHHCPWVGNCVGKRNYRYFYLFIL). C169 functions as the S-palmitoyl cysteine intermediate in the catalytic mechanism. The chain crosses the membrane as a helical span at residues 184 to 204 (FYLFILSLSLLTIYVFAFNIV). Over 205–228 (YVALKSLKIGFLETLKETPGTVLE) the chain is Lumenal. Residues 229–249 (VLICFFTLWSVVGLTGFHTFL) form a helical membrane-spanning segment. The Cytoplasmic segment spans residues 250-363 (VALNQTTNED…PPQEVTEAEK (114 aa)). The interval 303-363 (PLEESGSRPP…PPQEVTEAEK (61 aa)) is disordered. A compositionally biased stretch (polar residues) spans 310–322 (RPPSTQEASTSLL). Positions 345–355 (EMPPPEPPEPP) are enriched in pro residues.

This sequence belongs to the DHHC palmitoyltransferase family. ERF2/ZDHHC9 subfamily. Interacts with GOLGA7.

The protein localises to the endoplasmic reticulum membrane. Its subcellular location is the golgi apparatus membrane. It catalyses the reaction L-cysteinyl-[protein] + hexadecanoyl-CoA = S-hexadecanoyl-L-cysteinyl-[protein] + CoA. Palmitoyltransferase that catalyzes the addition of palmitate onto various protein substrates, such as ADRB2, GSDMD, HRAS, NRAS and CGAS. The ZDHHC9-GOLGA7 complex is a palmitoyltransferase specific for HRAS and NRAS. May have a palmitoyltransferase activity toward the beta-2 adrenergic receptor/ADRB2 and therefore regulate G protein-coupled receptor signaling. Acts as a regulator of innate immunity by catalyzing palmitoylation of CGAS, thereby promoting CGAS homodimerization and cyclic GMP-AMP synthase activity. Activates pyroptosis by catalyzing palmitoylation of gasdermin-D (GSDMD), thereby promoting membrane translocation and pore formation of GSDMD. In Bos taurus (Bovine), this protein is Palmitoyltransferase ZDHHC9 (ZDHHC9).